The primary structure comprises 176 residues: Nucleoside triphosphate/diphosphate phosphatase (176 aa).

Arg-23 functions as the Proton donor in the catalytic mechanism. Positions 87, 103, 105, 107, 120, and 123 each coordinate Mg(2+).

This sequence belongs to the Ntdp family. Requires Mg(2+) as cofactor.

It catalyses the reaction a ribonucleoside 5'-triphosphate + H2O = a ribonucleoside 5'-diphosphate + phosphate + H(+). The enzyme catalyses a ribonucleoside 5'-diphosphate + H2O = a ribonucleoside 5'-phosphate + phosphate + H(+). Its function is as follows. Has nucleoside phosphatase activity towards nucleoside triphosphates and nucleoside diphosphates. This chain is Nucleoside triphosphate/diphosphate phosphatase, found in Bacillus mycoides (strain KBAB4) (Bacillus weihenstephanensis).